Reading from the N-terminus, the 195-residue chain is Myelin-associated neurite-outgrowth inhibitor (195 aa).

Residue methionine 1 is modified to N-acetylmethionine. At 1-18 (MNPVYSPGSSGVPYANAK) the chain is on the cytoplasmic side. Serine 6 is modified (phosphoserine). A helical membrane pass occupies residues 19 to 42 (GIGYPAGFPMGYAAAAPAYSPNMY). The Extracellular portion of the chain corresponds to 43–142 (PGANPTFQAG…PAPLPPPRGN (100 aa)). Residue asparagine 46 is glycosylated (N-linked (GlcNAc...) asparagine). Residues 143-164 (GVTMGMVAGTTMAMSAGTLLTA) traverse the membrane as a helical segment. Topologically, residues 165 to 195 (HSPTPVAPHPVTVPTYRAPGTPTYSYVPPQW) are cytoplasmic.

Belongs to the FAM168 family. As to quaternary structure, may form homodimers. May interact with DAZAP2, FAM168A, PRDX6, RBM6, TMTC1 and YPEL2. Interacts with CDC27. In terms of processing, N-glycosylated.

The protein localises to the cytoplasm. Its subcellular location is the perinuclear region. It is found in the cell membrane. It localises to the cell projection. The protein resides in the axon. In terms of biological role, inhibitor of neuronal axonal outgrowth. Acts as a negative regulator of CDC42 and STAT3 and a positive regulator of STMN2. Positive regulator of CDC27. This is Myelin-associated neurite-outgrowth inhibitor (FAM168B) from Bos taurus (Bovine).